Reading from the N-terminus, the 292-residue chain is Universal stress protein Mb2346c (292 aa).

This sequence belongs to the universal stress protein A family.

This Mycobacterium bovis (strain ATCC BAA-935 / AF2122/97) protein is Universal stress protein Mb2346c.